Reading from the N-terminus, the 1676-residue chain is DNA-directed RNA polymerase subunit beta'-beta'' (1676 aa).

A DNA-directed RNA polymerase subunit beta' region spans residues 1-582 (MCDAIQIRLA…FLKTTPGRII (582 aa)). Residues cysteine 64, cysteine 66, cysteine 79, and cysteine 82 each coordinate Zn(2+). Residues aspartate 454, aspartate 456, and aspartate 458 each contribute to the Mg(2+) site. The tract at residues 583–1676 (FYQQAAYHVG…IPAGTGAKYL (1094 aa)) is DNA-directed RNA polymerase subunit beta''. Zn(2+) is bound by residues cysteine 804, cysteine 859, cysteine 866, and cysteine 869.

It in the N-terminal section; belongs to the RNA polymerase beta' chain family. RpoC1 subfamily. This sequence in the C-terminal section; belongs to the RNA polymerase beta' chain family. RpoC2 subfamily. In plastids the minimal PEP RNA polymerase catalytic core is composed of four subunits: alpha, beta, beta', and beta''. When a (nuclear-encoded) sigma factor is associated with the core the holoenzyme is formed, which can initiate transcription. Beta' and beta'' are fused in this algae. Requires Mg(2+) as cofactor. Zn(2+) is required as a cofactor.

It localises to the plastid. The protein localises to the chloroplast. The catalysed reaction is RNA(n) + a ribonucleoside 5'-triphosphate = RNA(n+1) + diphosphate. Its function is as follows. DNA-dependent RNA polymerase catalyzes the transcription of DNA into RNA using the four ribonucleoside triphosphates as substrates. In Cyanidioschyzon merolae (strain NIES-3377 / 10D) (Unicellular red alga), this protein is DNA-directed RNA polymerase subunit beta'-beta''.